Consider the following 215-residue polypeptide: Small ribosomal subunit protein uS3 (215 aa).

The 70-residue stretch at 38–107 (IRDYIKKTYH…KFQLNIEEVK (70 aa)) folds into the KH type-2 domain.

This sequence belongs to the universal ribosomal protein uS3 family. As to quaternary structure, part of the 30S ribosomal subunit. Forms a tight complex with proteins S10 and S14.

Its function is as follows. Binds the lower part of the 30S subunit head. Binds mRNA in the 70S ribosome, positioning it for translation. The protein is Small ribosomal subunit protein uS3 of Kosmotoga olearia (strain ATCC BAA-1733 / DSM 21960 / TBF 19.5.1).